Reading from the N-terminus, the 332-residue chain is Nucleotide-binding protein RC1_2868 (332 aa).

Residues 1 to 27 form a disordered region; it reads MTGQPLTMETAAGADAGTGAATHPADG. A compositionally biased stretch (low complexity) spans 10-22; that stretch reads TAAGADAGTGAAT. 36 to 43 is an ATP binding site; the sequence is GMSGGGLS. Residue 82–85 participates in GTP binding; that stretch reads DSRT. 2 stretches are compositionally biased toward basic and acidic residues: residues 302–312 and 322–332; these read GHRDLDRRHPA and VASRETPEEHR. The segment at 302-332 is disordered; the sequence is GHRDLDRRHPAPEPAPPWREVASRETPEEHR.

The protein belongs to the RapZ-like family.

Functionally, displays ATPase and GTPase activities. This Rhodospirillum centenum (strain ATCC 51521 / SW) protein is Nucleotide-binding protein RC1_2868.